A 1527-amino-acid chain; its full sequence is DNA-directed RNA polymerase subunit beta'' (1527 aa).

Cys220, Cys296, Cys303, and Cys306 together coordinate Zn(2+). 2 stretches are compositionally biased toward basic and acidic residues: residues Arg644–Glu661 and Pro671–Glu681. Disordered stretches follow at residues Arg644–Glu681 and Tyr712–Gly793. Composition is skewed to acidic residues over residues Gly737–Asp755 and Thr763–Asp786.

Belongs to the RNA polymerase beta' chain family. RpoC2 subfamily. In terms of assembly, in plastids the minimal PEP RNA polymerase catalytic core is composed of four subunits: alpha, beta, beta', and beta''. When a (nuclear-encoded) sigma factor is associated with the core the holoenzyme is formed, which can initiate transcription. The cofactor is Zn(2+).

Its subcellular location is the plastid. It localises to the chloroplast. It carries out the reaction RNA(n) + a ribonucleoside 5'-triphosphate = RNA(n+1) + diphosphate. In terms of biological role, DNA-dependent RNA polymerase catalyzes the transcription of DNA into RNA using the four ribonucleoside triphosphates as substrates. In Zea mays (Maize), this protein is DNA-directed RNA polymerase subunit beta''.